Here is a 344-residue protein sequence, read N- to C-terminus: Dihydroorotase (344 aa).

2 residues coordinate Zn(2+): His13 and His15. Substrate contacts are provided by residues His15–Arg17 and Asn41. Positions 99, 136, and 174 each coordinate Zn(2+). At Lys99 the chain carries N6-carboxylysine. Residue His136 coordinates substrate. Leu219 is a binding site for substrate. Asp247 serves as a coordination point for Zn(2+). Asp247 is an active-site residue. The substrate site is built by His251 and Ala263.

Belongs to the metallo-dependent hydrolases superfamily. DHOase family. Class II DHOase subfamily. Homodimer. Requires Zn(2+) as cofactor.

It carries out the reaction (S)-dihydroorotate + H2O = N-carbamoyl-L-aspartate + H(+). The protein operates within pyrimidine metabolism; UMP biosynthesis via de novo pathway; (S)-dihydroorotate from bicarbonate: step 3/3. In terms of biological role, catalyzes the reversible cyclization of carbamoyl aspartate to dihydroorotate. This chain is Dihydroorotase, found in Microcystis aeruginosa (strain NIES-843 / IAM M-2473).